A 340-amino-acid polypeptide reads, in one-letter code: Heat-inducible transcription repressor HrcA (340 aa).

The protein belongs to the HrcA family.

Negative regulator of class I heat shock genes (grpE-dnaK-dnaJ and groELS operons). Prevents heat-shock induction of these operons. This Burkholderia vietnamiensis (strain G4 / LMG 22486) (Burkholderia cepacia (strain R1808)) protein is Heat-inducible transcription repressor HrcA.